The following is a 377-amino-acid chain: Succinyl-diaminopimelate desuccinylase (377 aa).

His-67 serves as a coordination point for Zn(2+). Asp-69 is a catalytic residue. Zn(2+) is bound at residue Asp-100. Glu-134 functions as the Proton acceptor in the catalytic mechanism. 3 residues coordinate Zn(2+): Glu-135, Glu-163, and His-349.

It belongs to the peptidase M20A family. DapE subfamily. In terms of assembly, homodimer. Zn(2+) is required as a cofactor. Co(2+) serves as cofactor.

The enzyme catalyses N-succinyl-(2S,6S)-2,6-diaminopimelate + H2O = (2S,6S)-2,6-diaminopimelate + succinate. It participates in amino-acid biosynthesis; L-lysine biosynthesis via DAP pathway; LL-2,6-diaminopimelate from (S)-tetrahydrodipicolinate (succinylase route): step 3/3. In terms of biological role, catalyzes the hydrolysis of N-succinyl-L,L-diaminopimelic acid (SDAP), forming succinate and LL-2,6-diaminopimelate (DAP), an intermediate involved in the bacterial biosynthesis of lysine and meso-diaminopimelic acid, an essential component of bacterial cell walls. This chain is Succinyl-diaminopimelate desuccinylase, found in Actinobacillus pleuropneumoniae serotype 3 (strain JL03).